Reading from the N-terminus, the 154-residue chain is Ribonuclease H (154 aa).

One can recognise an RNase H type-1 domain in the interval 5–147 (GKSRVAIYTD…ADMLARGEVE (143 aa)). Mg(2+) contacts are provided by D14, E53, D75, and D139.

The protein belongs to the RNase H family. In terms of assembly, monomer. The cofactor is Mg(2+).

It localises to the cytoplasm. It carries out the reaction Endonucleolytic cleavage to 5'-phosphomonoester.. In terms of biological role, endonuclease that specifically degrades the RNA of RNA-DNA hybrids. This is Ribonuclease H from Anaplasma marginale (strain St. Maries).